Consider the following 831-residue polypeptide: Translation initiation factor IF-2 (831 aa).

Positions 116–157 (IEPLETDKEVEQKQQNTEENKVEVSAKIVQDDEDIPSQIPKK) are disordered. Residues 117–139 (EPLETDKEVEQKQQNTEENKVEV) show a composition bias toward basic and acidic residues. In terms of domain architecture, tr-type G spans 329–499 (TRAPVVTVMG…LLIAEMQDLK (171 aa)). Residues 338–345 (GHVDHGKT) form a G1 region. 338 to 345 (GHVDHGKT) lines the GTP pocket. Positions 363 to 367 (GITQH) are G2. Residues 385 to 388 (DTPG) form a G3 region. GTP is bound by residues 385–389 (DTPGH) and 439–442 (NKID). Residues 439 to 442 (NKID) are G4. The tract at residues 475–477 (SAL) is G5.

This sequence belongs to the TRAFAC class translation factor GTPase superfamily. Classic translation factor GTPase family. IF-2 subfamily.

Its subcellular location is the cytoplasm. One of the essential components for the initiation of protein synthesis. Protects formylmethionyl-tRNA from spontaneous hydrolysis and promotes its binding to the 30S ribosomal subunits. Also involved in the hydrolysis of GTP during the formation of the 70S ribosomal complex. The sequence is that of Translation initiation factor IF-2 from Rickettsia conorii (strain ATCC VR-613 / Malish 7).